Here is a 407-residue protein sequence, read N- to C-terminus: Flagellar calcium-binding protein TB-44A (407 aa).

The disordered stretch occupies residues 1 to 27 (MGCSASKDTTNSKDGAASKGGKDGKTT). Residues 25-399 (KTTADRKVAW…LQVCGDPDGE (375 aa)) are 2 X 186 AA almost perfect repeats. The 36-residue stretch at 48 to 83 (ESKSRRIELFKRFDTNGTGKLSFREVLDGCYSILKL) folds into the EF-hand 1 domain. D61, N63, T65, K67, and E72 together coordinate Ca(2+). Positions 110-121 (GVGEEDLVEFLE) are ancestral calcium site 2. 3 consecutive EF-hand domains span residues 130-165 (YDIFELTVMFDTMDKDGSLLLELQEFKEALPKWKEW), 167-202 (VDITDATTVFNEIDTNGSGVVTFDEFSCWAVTKKLQ), and 237-272 (ESKSRRIELFKQFDTNGTGKLGFREVLDGCYSILKL). D143, D145, S147, E154, D180, N182, S184, E191, D250, N252, T254, K256, and E261 together coordinate Ca(2+). Residues 299–310 (GVGEEDLVEFLE) form an ancestral calcium site 6 region. 2 EF-hand domains span residues 319 to 354 (YDIFELTVMFDTMDKDGSLLLELQEFKEALKKWKEW) and 356 to 391 (VDITDATTVFNEIDTNGSGVVTFDEFSCWAVTKKLQ). Residues D332, D334, S336, E343, D369, N371, S373, and E380 each contribute to the Ca(2+) site.

Belongs to the calflagin family.

The protein resides in the cell projection. Its subcellular location is the cilium. The protein localises to the flagellum. Functionally, may contribute to the rapid motility of the trypanosomes, playing a role either in flagellar structure or in calcium metabolism. Could alternate between a GDP-bound inactive form to a calcium/GTP-bound active form. This chain is Flagellar calcium-binding protein TB-44A, found in Trypanosoma brucei brucei.